Here is a 296-residue protein sequence, read N- to C-terminus: Ribosomal RNA small subunit methyltransferase H (296 aa).

Residues 38–40 (GAH), Glu57, Phe88, Asp103, and His110 each bind S-adenosyl-L-methionine.

It belongs to the methyltransferase superfamily. RsmH family.

It localises to the cytoplasm. The enzyme catalyses cytidine(1402) in 16S rRNA + S-adenosyl-L-methionine = N(4)-methylcytidine(1402) in 16S rRNA + S-adenosyl-L-homocysteine + H(+). Specifically methylates the N4 position of cytidine in position 1402 (C1402) of 16S rRNA. This is Ribosomal RNA small subunit methyltransferase H from Borreliella afzelii (strain PKo) (Borrelia afzelii).